A 384-amino-acid polypeptide reads, in one-letter code: L-cysteine:1D-myo-inositol 2-amino-2-deoxy-alpha-D-glucopyranoside ligase (384 aa).

Cys16 lines the Zn(2+) pocket. L-cysteinyl-5'-AMP-binding positions include 16–19 (CGIT), Thr31, and 54–56 (NVT). Positions 18–28 (ITPYDATHLGH) match the 'HIGH' region motif. The 'ERGGDP' region motif lies at 159–164 (QSGGDP). Trp199 contributes to the L-cysteinyl-5'-AMP binding site. Position 203 (Cys203) interacts with Zn(2+). Residue 221–223 (GSD) participates in L-cysteinyl-5'-AMP binding. His228 is a Zn(2+) binding site. Residue Ile255 participates in L-cysteinyl-5'-AMP binding. A 'KMSKS' region motif is present at residues 261-265 (KMSKS).

Belongs to the class-I aminoacyl-tRNA synthetase family. MshC subfamily. In terms of assembly, monomer. It depends on Zn(2+) as a cofactor.

It catalyses the reaction 1D-myo-inositol 2-amino-2-deoxy-alpha-D-glucopyranoside + L-cysteine + ATP = 1D-myo-inositol 2-(L-cysteinylamino)-2-deoxy-alpha-D-glucopyranoside + AMP + diphosphate + H(+). Functionally, catalyzes the ATP-dependent condensation of GlcN-Ins and L-cysteine to form L-Cys-GlcN-Ins. This chain is L-cysteine:1D-myo-inositol 2-amino-2-deoxy-alpha-D-glucopyranoside ligase, found in Mycobacterium leprae (strain Br4923).